Consider the following 260-residue polypeptide: Phosphate import ATP-binding protein PstB (260 aa).

The region spanning 14-255 (IETENLSLFY…PKNTKTEEYI (242 aa)) is the ABC transporter domain. 46–53 (GPSGCGKS) is a binding site for ATP.

Belongs to the ABC transporter superfamily. Phosphate importer (TC 3.A.1.7) family. As to quaternary structure, the complex is composed of two ATP-binding proteins (PstB), two transmembrane proteins (PstC and PstA) and a solute-binding protein (PstS).

Its subcellular location is the cell inner membrane. It catalyses the reaction phosphate(out) + ATP + H2O = ADP + 2 phosphate(in) + H(+). In terms of biological role, part of the ABC transporter complex PstSACB involved in phosphate import. Responsible for energy coupling to the transport system. The polypeptide is Phosphate import ATP-binding protein PstB (Borrelia garinii subsp. bavariensis (strain ATCC BAA-2496 / DSM 23469 / PBi) (Borreliella bavariensis)).